A 605-amino-acid chain; its full sequence is Probable potassium transport system protein Kup (605 aa).

The next 12 membrane-spanning stretches (helical) occupy residues 18 to 38 (GLVF…IIAL), 46 to 66 (ILGI…LEYA), 97 to 117 (MAFV…DGVI), 138 to 158 (GLSQ…LFVF), 169 to 189 (AFGP…AISV), 204 to 224 (AISF…EVIL), 247 to 267 (AWYF…AFII), 287 to 307 (FYIP…QALI), 339 to 359 (IYIG…MLVF), 368 to 388 (AYGF…TMIF), 395 to 415 (WKVP…VSNC), and 418 to 438 (LPHG…VILI).

It belongs to the HAK/KUP transporter (TC 2.A.72) family.

It localises to the cell inner membrane. It carries out the reaction K(+)(in) + H(+)(in) = K(+)(out) + H(+)(out). Functionally, transport of potassium into the cell. Likely operates as a K(+):H(+) symporter. The polypeptide is Probable potassium transport system protein Kup (Pelobacter propionicus (strain DSM 2379 / NBRC 103807 / OttBd1)).